Consider the following 282-residue polypeptide: Putative phosphoenolpyruvate synthase regulatory protein (282 aa).

162–169 (GVSRSGKT) serves as a coordination point for ADP.

It belongs to the pyruvate, phosphate/water dikinase regulatory protein family. PSRP subfamily.

It catalyses the reaction [pyruvate, water dikinase] + ADP = [pyruvate, water dikinase]-phosphate + AMP + H(+). It carries out the reaction [pyruvate, water dikinase]-phosphate + phosphate + H(+) = [pyruvate, water dikinase] + diphosphate. Functionally, bifunctional serine/threonine kinase and phosphorylase involved in the regulation of the phosphoenolpyruvate synthase (PEPS) by catalyzing its phosphorylation/dephosphorylation. This Psychrobacter arcticus (strain DSM 17307 / VKM B-2377 / 273-4) protein is Putative phosphoenolpyruvate synthase regulatory protein.